We begin with the raw amino-acid sequence, 547 residues long: Glucose-6-phosphate isomerase 2 (547 aa).

Glu351 functions as the Proton donor in the catalytic mechanism. Residues His382 and Lys508 contribute to the active site.

Belongs to the GPI family.

The protein resides in the cytoplasm. The catalysed reaction is alpha-D-glucose 6-phosphate = beta-D-fructose 6-phosphate. The protein operates within carbohydrate biosynthesis; gluconeogenesis. It participates in carbohydrate degradation; glycolysis; D-glyceraldehyde 3-phosphate and glycerone phosphate from D-glucose: step 2/4. In terms of biological role, catalyzes the reversible isomerization of glucose-6-phosphate to fructose-6-phosphate. This Neisseria meningitidis serogroup B (strain ATCC BAA-335 / MC58) protein is Glucose-6-phosphate isomerase 2.